We begin with the raw amino-acid sequence, 433 residues long: Tol-Pal system protein TolB (433 aa).

A signal peptide spans methionine 1–alanine 21.

The protein belongs to the TolB family. The Tol-Pal system is composed of five core proteins: the inner membrane proteins TolA, TolQ and TolR, the periplasmic protein TolB and the outer membrane protein Pal. They form a network linking the inner and outer membranes and the peptidoglycan layer.

Its subcellular location is the periplasm. In terms of biological role, part of the Tol-Pal system, which plays a role in outer membrane invagination during cell division and is important for maintaining outer membrane integrity. This chain is Tol-Pal system protein TolB, found in Pseudomonas syringae pv. syringae (strain B728a).